The chain runs to 273 residues: Putative pyruvate, phosphate dikinase regulatory protein (273 aa).

153 to 160 (GVSRTSKT) contributes to the ADP binding site.

It belongs to the pyruvate, phosphate/water dikinase regulatory protein family. PDRP subfamily.

The catalysed reaction is N(tele)-phospho-L-histidyl/L-threonyl-[pyruvate, phosphate dikinase] + ADP = N(tele)-phospho-L-histidyl/O-phospho-L-threonyl-[pyruvate, phosphate dikinase] + AMP + H(+). The enzyme catalyses N(tele)-phospho-L-histidyl/O-phospho-L-threonyl-[pyruvate, phosphate dikinase] + phosphate + H(+) = N(tele)-phospho-L-histidyl/L-threonyl-[pyruvate, phosphate dikinase] + diphosphate. In terms of biological role, bifunctional serine/threonine kinase and phosphorylase involved in the regulation of the pyruvate, phosphate dikinase (PPDK) by catalyzing its phosphorylation/dephosphorylation. This Rhizobium meliloti (strain 1021) (Ensifer meliloti) protein is Putative pyruvate, phosphate dikinase regulatory protein.